Here is a 128-residue protein sequence, read N- to C-terminus: Large ribosomal subunit protein mL52 (128 aa).

The transit peptide at 1-28 (MLQIAKLCLATSGRITAQRYVAVTTARA) directs the protein to the mitochondrion.

This sequence belongs to the mitochondrion-specific ribosomal protein mL52 family. As to quaternary structure, component of the mitochondrial ribosome large subunit (39S) which comprises a 16S rRNA and about 50 distinct proteins.

The protein localises to the mitochondrion. The protein is Large ribosomal subunit protein mL52 (mRpL52) of Drosophila pseudoobscura pseudoobscura (Fruit fly).